The chain runs to 249 residues: Fasciclin-like arabinogalactan protein 12 (249 aa).

Positions 1–24 (MEHSLIILLFTVLLLLTTTPGILS) are cleaved as a signal peptide. Positions 37 to 181 (PTNVTKILEK…LAVYQVDKVL (145 aa)) constitute an FAS1 domain. Residues Asn-39, Asn-71, Asn-143, Asn-152, and Asn-159 are each glycosylated (N-linked (GlcNAc...) asparagine). The disordered stretch occupies residues 186–219 (VFDPRPPAPAPAPSVSKSKKKKDDSDSSSDDSPA). Asp-220 carries GPI-anchor amidated aspartate lipidation. Residues 221–249 (ASFALRNVGSVCDAVSFCVMSVMLAWFYL) constitute a propeptide, removed in mature form.

It belongs to the fasciclin-like AGP family.

It localises to the cell membrane. May be a cell surface adhesion protein. The protein is Fasciclin-like arabinogalactan protein 12 (FLA12) of Arabidopsis thaliana (Mouse-ear cress).